The chain runs to 1135 residues: Envelopment polyprotein (1135 aa).

The N-terminal stretch at 1–35 (MRILKLLELVVKVSLFTIALSSVLLAFLTFRATDA) is a signal peptide. The Lumenal segment spans residues 36–314 (KVEIIRGDHP…KYSKSIYKQT (279 aa)). The Cell attachment site motif lies at 41 to 43 (RGD). An N-linked (GlcNAc...) asparagine; by host glycan is attached at asparagine 116. Cysteine 122 and cysteine 156 are disulfide-bonded. A non-covalent dimerization region spans residues 177 to 195 (LDNKRHFSVGTNFFIPESL). An N-linked (GlcNAc...) asparagine; by host glycan is attached at asparagine 210. A disulfide bridge links cysteine 224 with cysteine 285. The helical transmembrane segment at 315–366 (ACINFSWIRLILIALLIYFPIRWLVNKTTKPLFLWYDLMGLITYPVLLLINC) threads the bilayer. Topologically, residues 367-484 (LWKYFPFKCS…VPGCPFLVTS (118 aa)) are cytoplasmic. The signal for signal peptide peptidase stretch occupies residues 437–484 (LSLSLLKFVTEILIGLVILSQIPMSMAQTTQCLSGCFYVPGCPFLVTS). The Lumenal segment spans residues 485–1067 (KFEKCPEKDQ…YFGSFFDTIR (583 aa)). Residues asparagine 588, asparagine 605, and asparagine 980 are each glycosylated (N-linked (GlcNAc...) asparagine; by host). A helical membrane pass occupies residues 1068-1088 (VVLLIAFIFLVIYFCSILTSI). At 1089 to 1135 (CKGYVKHKSYKSRSKIEDDDEPEIKAPMLMKDTMTRRRPPMDFSHLV) the chain is on the cytoplasmic side.

Belongs to the tospovirus envelope glycoprotein family. As to quaternary structure, homodimer; disulfide-linked. Heterodimer with Glycoprotein C. Interacts with nucleoprotein. Heterodimer with Glycoprotein N. Interacts with nucleoprotein. Specific enzymatic cleavages in vivo yield mature proteins including Glycoprotein N and Glycoprotein C. Post-translationally, glycosylated with O-linked glycans. Glycosylation is essential for proper subcellular location. In terms of processing, cleaved at acidic pH.

It is found in the virion membrane. The protein resides in the host Golgi apparatus membrane. Its subcellular location is the host endoplasmic reticulum membrane. Its function is as follows. Forms the spikes present at the surface of the virion together with Glycoprotein C. They are able to attach the virion to a cell receptor and to promote fusion of membranes after endocytosis of the virion. Plays a role in virus binding and/or entry into the vector midgut. In terms of biological role, forms the spikes present at the surface of the virion together with Glycoprotein N. They are able to attach the virion to a cell receptor and to promote fusion of membranes after endocytosis of the virion. Probable class II fusion protein. In Frankliniella occidentalis (Western flower thrips), this protein is Envelopment polyprotein (GP).